The following is a 469-amino-acid chain: Uronate isomerase (469 aa).

The protein belongs to the metallo-dependent hydrolases superfamily. Uronate isomerase family.

It catalyses the reaction D-glucuronate = D-fructuronate. The catalysed reaction is aldehydo-D-galacturonate = keto-D-tagaturonate. The protein operates within carbohydrate metabolism; pentose and glucuronate interconversion. In Yersinia enterocolitica serotype O:8 / biotype 1B (strain NCTC 13174 / 8081), this protein is Uronate isomerase.